We begin with the raw amino-acid sequence, 50 residues long: U23-theraphotoxin-Cg1a 2 (50 aa).

3 disulfides stabilise this stretch: Cys-22/Cys-36, Cys-29/Cys-41, and Cys-35/Cys-47.

Belongs to the neurotoxin 10 (Hwtx-1) family. 64 (Jztx-20) subfamily. As to expression, expressed by the venom gland.

The protein resides in the secreted. In terms of biological role, probable ion channel inhibitor. This chain is U23-theraphotoxin-Cg1a 2, found in Chilobrachys guangxiensis (Chinese earth tiger tarantula).